Here is a 170-residue protein sequence, read N- to C-terminus: Lipoprotein signal peptidase (170 aa).

3 helical membrane-spanning segments follow: residues 12–32 (WYWVVVLVFVADQLSKQWVLA), 67–87 (WQRWLFTLVAVGFSTLLTVWL), and 93–113 (GLWRLNLAYTLVIGGALGNLI). Residues Asp123 and Asp141 contribute to the active site. Residues 133–153 (HFPAFNIADSAICVGAGLIIL) form a helical membrane-spanning segment.

Belongs to the peptidase A8 family.

It localises to the cell inner membrane. The catalysed reaction is Release of signal peptides from bacterial membrane prolipoproteins. Hydrolyzes -Xaa-Yaa-Zaa-|-(S,diacylglyceryl)Cys-, in which Xaa is hydrophobic (preferably Leu), and Yaa (Ala or Ser) and Zaa (Gly or Ala) have small, neutral side chains.. It participates in protein modification; lipoprotein biosynthesis (signal peptide cleavage). In terms of biological role, this protein specifically catalyzes the removal of signal peptides from prolipoproteins. The polypeptide is Lipoprotein signal peptidase (Shewanella loihica (strain ATCC BAA-1088 / PV-4)).